The primary structure comprises 92 residues: MSRSLKKGPFIADSLLTKIEKLNEKGDKQVIKTWSRASTIIPAMIGHTIAVHNGKQHVPIFISEQMVGHKLGEFAPTRTFRGHSKGDKKARR.

This sequence belongs to the universal ribosomal protein uS19 family.

Its function is as follows. Protein S19 forms a complex with S13 that binds strongly to the 16S ribosomal RNA. In Crocosphaera subtropica (strain ATCC 51142 / BH68) (Cyanothece sp. (strain ATCC 51142)), this protein is Small ribosomal subunit protein uS19.